The sequence spans 67 residues: MPRTRECDYCGTDIEPGTGTMFVHKDGATTHFCSSKCENNADLGREARNLEWTDTARGEAGEAEDEA.

4 residues coordinate Zn(2+): cysteine 7, cysteine 10, cysteine 33, and cysteine 37. The segment at cysteine 7 to cysteine 37 adopts a C4-type zinc-finger fold. Residues arginine 48–alanine 60 are compositionally biased toward basic and acidic residues. Residues arginine 48–alanine 67 are disordered.

The protein belongs to the eukaryotic ribosomal protein eL24 family. As to quaternary structure, part of the 50S ribosomal subunit. Forms a cluster with proteins L3 and L14. Zn(2+) serves as cofactor.

In terms of biological role, binds to the 23S rRNA. The sequence is that of Large ribosomal subunit protein eL24 (rpl24e) from Haloarcula marismortui (strain ATCC 43049 / DSM 3752 / JCM 8966 / VKM B-1809) (Halobacterium marismortui).